The primary structure comprises 187 residues: dTTP/UTP pyrophosphatase (187 aa).

D65 functions as the Proton acceptor in the catalytic mechanism.

The protein belongs to the Maf family. YhdE subfamily. The cofactor is a divalent metal cation.

The protein localises to the cytoplasm. The enzyme catalyses dTTP + H2O = dTMP + diphosphate + H(+). The catalysed reaction is UTP + H2O = UMP + diphosphate + H(+). Functionally, nucleoside triphosphate pyrophosphatase that hydrolyzes dTTP and UTP. May have a dual role in cell division arrest and in preventing the incorporation of modified nucleotides into cellular nucleic acids. This Deinococcus geothermalis (strain DSM 11300 / CIP 105573 / AG-3a) protein is dTTP/UTP pyrophosphatase.